Consider the following 284-residue polypeptide: Asialoglycoprotein receptor 1 (284 aa).

Residues 1–39 (MTKDYQDFQHLDNENDHHQLQRGPPPAPRLLQRLCSGFR) are Cytoplasmic-facing. The short motif at 5–8 (YQDF) is the Endocytosis signal element. Cysteine 35 carries S-palmitoyl cysteine lipidation. A helical; Signal-anchor for type II membrane protein transmembrane segment spans residues 40 to 60 (LFLLSLGLSILLLVVVCVITS). Residues 58–122 (ITSQNSQLRE…EDLREDHSRL (65 aa)) adopt a coiled-coil conformation. Residues 61–284 (QNSQLREDLR…VCETELGKAN (224 aa)) lie on the Extracellular side of the membrane. N-linked (GlcNAc...) asparagine glycosylation is found at asparagine 75, asparagine 78, and asparagine 146. 3 cysteine pairs are disulfide-bonded: cysteine 153–cysteine 164, cysteine 181–cysteine 276, and cysteine 254–cysteine 268. One can recognise a C-type lectin domain in the interval 160–277 (YEGSCYWFSS…CRRPYRWVCE (118 aa)). 11 residues coordinate Ca(2+): valine 190, glutamate 196, aspartate 215, glutamine 239, aspartate 241, aspartate 242, glutamate 252, aspartate 253, asparagine 264, aspartate 265, and glutamate 277.

In terms of assembly, interacts with LASS2. Post-translationally, phosphorylated on a cytoplasmic Ser residue. In terms of tissue distribution, expressed exclusively in hepatic parenchymal cells.

The protein localises to the membrane. Functionally, mediates the endocytosis of plasma glycoproteins to which the terminal sialic acid residue on their complex carbohydrate moieties has been removed. The receptor recognizes terminal galactose and N-acetylgalactosamine units. After ligand binding to the receptor, the resulting complex is internalized and transported to a sorting organelle, where receptor and ligand are disassociated. The receptor then returns to the cell membrane surface. The polypeptide is Asialoglycoprotein receptor 1 (Asgr1) (Rattus norvegicus (Rat)).